A 476-amino-acid polypeptide reads, in one-letter code: MKPILPDYNNAGVLIIGDVMLDRYWYGPTSRISPEAPVPVVKVENNEERPGGAANVAMNIASLGGHARIVGLTGMDEPAKVLTETLNSLKVKCDFVALPEYPTITKLRVMSRGQQLIRLDFEDKFEGTDPELVLTRMERALPHVQAVILSDYAKGALEHVEALIAKARAANVPVFIDPKGTNFEPYRGATLLTPNMSEFEAVVGKVTSDDDLVEKALGLIEKFELGALLVTRSEHGMTLVRPDQKPFHLPTQAKEVYDVTGAGDTVISVLAASVAAGKPLDEACALANAAAGVVVGKLGTSTLSTIELAEAIHGSRDTDFGVIAEAALIDAVKAAQAKGEKVVMTNGCFDILHAGHVSYLNNAAKLGDRLIVAVNTDESVKRLKGPGRPVNPTDRRMAVLAGLGAVDWVVPFSEDTPQRLISEVLPDLLVKGGDYKPEDIAGGKEVIAAGGEVKVLNFEDGCSTTEIIDAIKGGRG.

The tract at residues 1–318 is ribokinase; the sequence is MKPILPDYNN…AEAIHGSRDT (318 aa). 195-198 lines the ATP pocket; sequence NMSE. The active site involves D264. The interval 344 to 476 is cytidylyltransferase; the sequence is MTNGCFDILH…IIDAIKGGRG (133 aa).

It in the N-terminal section; belongs to the carbohydrate kinase PfkB family. The protein in the C-terminal section; belongs to the cytidylyltransferase family. As to quaternary structure, homodimer.

The enzyme catalyses D-glycero-beta-D-manno-heptose 7-phosphate + ATP = D-glycero-beta-D-manno-heptose 1,7-bisphosphate + ADP + H(+). The catalysed reaction is D-glycero-beta-D-manno-heptose 1-phosphate + ATP + H(+) = ADP-D-glycero-beta-D-manno-heptose + diphosphate. Its pathway is nucleotide-sugar biosynthesis; ADP-L-glycero-beta-D-manno-heptose biosynthesis; ADP-L-glycero-beta-D-manno-heptose from D-glycero-beta-D-manno-heptose 7-phosphate: step 1/4. It functions in the pathway nucleotide-sugar biosynthesis; ADP-L-glycero-beta-D-manno-heptose biosynthesis; ADP-L-glycero-beta-D-manno-heptose from D-glycero-beta-D-manno-heptose 7-phosphate: step 3/4. The protein operates within bacterial outer membrane biogenesis; LPS core biosynthesis. Catalyzes the phosphorylation of D-glycero-D-manno-heptose 7-phosphate at the C-1 position to selectively form D-glycero-beta-D-manno-heptose-1,7-bisphosphate. In terms of biological role, catalyzes the ADP transfer from ATP to D-glycero-beta-D-manno-heptose 1-phosphate, yielding ADP-D-glycero-beta-D-manno-heptose. The chain is Bifunctional protein HldE from Vibrio vulnificus (strain CMCP6).